Consider the following 814-residue polypeptide: Syn-copalyl diphosphate synthase TPS3, chloroplastic (814 aa).

The transit peptide at 1 to 52 (MCSLSTLSPNFSNAYGSKSVSSTASRFPCWQRSNETWKTQSREVIHWTYVVR) directs the protein to the chloroplast. K248 serves as a coordination point for substrate. D386 and D388 together coordinate Mg(2+). Positions 386–389 (DIDD) match the DXDD motif motif. K472 contacts substrate.

It belongs to the terpene synthase family. The cofactor is Mg(2+). Mostly expressed in trichomes of leaves and fruits.

It is found in the plastid. The protein resides in the chloroplast. The catalysed reaction is (2E,6E,10E)-geranylgeranyl diphosphate = 9alpha-copalyl diphosphate. Its pathway is secondary metabolite biosynthesis; terpenoid biosynthesis. Its function is as follows. Involved in the biosynthesis of labdane-type diterpenoid including cleroda-dienols, and peregrinol lactones and furan derivatives, dopaminergic diterpenoids that can bind to dopamine receptors in the human pituitary gland, have probably ability to lower prolactin levels, and are used to treat menstrual cycle disorders (e.g. premenstrual syndrome and mastodynia). Terpene synthase that produces syn-copalyl diphosophate from geranylgeranyl diphosphate (GGPP). The polypeptide is Syn-copalyl diphosphate synthase TPS3, chloroplastic (Vitex agnus-castus (Chaste tree)).